Consider the following 276-residue polypeptide: Large ribosomal subunit protein uL2 (276 aa).

The interval 223–276 is disordered; sequence AVMNPVDHPHGGGEGKNSVGRKSPLTPWGKPALGIKTRGRKTSDKFIVRRRNEK. Positions 263 to 276 are enriched in basic and acidic residues; it reads KTSDKFIVRRRNEK.

It belongs to the universal ribosomal protein uL2 family. As to quaternary structure, part of the 50S ribosomal subunit. Forms a bridge to the 30S subunit in the 70S ribosome.

Functionally, one of the primary rRNA binding proteins. Required for association of the 30S and 50S subunits to form the 70S ribosome, for tRNA binding and peptide bond formation. It has been suggested to have peptidyltransferase activity; this is somewhat controversial. Makes several contacts with the 16S rRNA in the 70S ribosome. The polypeptide is Large ribosomal subunit protein uL2 (Fusobacterium nucleatum subsp. nucleatum (strain ATCC 25586 / DSM 15643 / BCRC 10681 / CIP 101130 / JCM 8532 / KCTC 2640 / LMG 13131 / VPI 4355)).